The primary structure comprises 238 residues: Fatty acid metabolism regulator protein (238 aa).

The HTH gntR-type domain maps to 6–74; that stretch reads KGPASFAEKY…HGKPTRVNNF (69 aa). Residues 34 to 53 constitute a DNA-binding region (H-T-H motif); sequence ERELSELIGVTRTTLREVLQ.

In terms of assembly, homodimer.

Its subcellular location is the cytoplasm. Its function is as follows. Multifunctional regulator of fatty acid metabolism. In Shewanella putrefaciens (strain CN-32 / ATCC BAA-453), this protein is Fatty acid metabolism regulator protein.